A 189-amino-acid chain; its full sequence is Potassium-transporting ATPase KdpC subunit (189 aa).

The chain crosses the membrane as a helical span at residues 10–30; that stretch reads ITLVFCVFFSVFYILILWLFA.

The protein belongs to the KdpC family. As to quaternary structure, the system is composed of three essential subunits: KdpA, KdpB and KdpC.

Its subcellular location is the cell inner membrane. Part of the high-affinity ATP-driven potassium transport (or Kdp) system, which catalyzes the hydrolysis of ATP coupled with the electrogenic transport of potassium into the cytoplasm. This subunit acts as a catalytic chaperone that increases the ATP-binding affinity of the ATP-hydrolyzing subunit KdpB by the formation of a transient KdpB/KdpC/ATP ternary complex. The polypeptide is Potassium-transporting ATPase KdpC subunit (Bacteroides thetaiotaomicron (strain ATCC 29148 / DSM 2079 / JCM 5827 / CCUG 10774 / NCTC 10582 / VPI-5482 / E50)).